A 200-amino-acid polypeptide reads, in one-letter code: LexA repressor (200 aa).

The segment at residues 28–48 is a DNA-binding region (H-T-H motif); sequence RAEISNRLGFRSANAAEEHLK. Residues Ser-121 and Lys-158 each act as for autocatalytic cleavage activity in the active site.

Belongs to the peptidase S24 family. As to quaternary structure, homodimer.

The enzyme catalyses Hydrolysis of Ala-|-Gly bond in repressor LexA.. Represses a number of genes involved in the response to DNA damage (SOS response), including recA and lexA. In the presence of single-stranded DNA, RecA interacts with LexA causing an autocatalytic cleavage which disrupts the DNA-binding part of LexA, leading to derepression of the SOS regulon and eventually DNA repair. This is LexA repressor from Hahella chejuensis (strain KCTC 2396).